The chain runs to 99 residues: MNQERVFKVLLGPHISEKATVLAESKKQFVFKVATDATKLEIKKAVEALFDVKVANVTTLNVQGKTKRTVRGLGKRNDWKKAYVALQPGQDLDFASSAE.

The protein belongs to the universal ribosomal protein uL23 family. In terms of assembly, part of the 50S ribosomal subunit. Contacts protein L29, and trigger factor when it is bound to the ribosome.

Its function is as follows. One of the early assembly proteins it binds 23S rRNA. One of the proteins that surrounds the polypeptide exit tunnel on the outside of the ribosome. Forms the main docking site for trigger factor binding to the ribosome. The protein is Large ribosomal subunit protein uL23 of Azotobacter vinelandii (strain DJ / ATCC BAA-1303).